We begin with the raw amino-acid sequence, 336 residues long: D-erythrose-4-phosphate dehydrogenase (336 aa).

11-12 is an NAD(+) binding site; that stretch reads RI. Residues 153 to 155, Arg199, 212 to 213, and Arg235 each bind substrate; these read SCT and TK. Catalysis depends on Cys154, which acts as the Nucleophile. Position 317 (Asn317) interacts with NAD(+).

It belongs to the glyceraldehyde-3-phosphate dehydrogenase family. Epd subfamily. As to quaternary structure, homotetramer.

It is found in the cytoplasm. The enzyme catalyses D-erythrose 4-phosphate + NAD(+) + H2O = 4-phospho-D-erythronate + NADH + 2 H(+). The protein operates within cofactor biosynthesis; pyridoxine 5'-phosphate biosynthesis; pyridoxine 5'-phosphate from D-erythrose 4-phosphate: step 1/5. Its function is as follows. Catalyzes the NAD-dependent conversion of D-erythrose 4-phosphate to 4-phosphoerythronate. The polypeptide is D-erythrose-4-phosphate dehydrogenase (Aeromonas salmonicida (strain A449)).